Here is a 322-residue protein sequence, read N- to C-terminus: MPVTVTRTTITTTTTSSSGQGSPTIVGSPRALTQPLGLLRLLQLVSTCVAFSLVASVGAWTGPMGNWSMFTWCFCFSVTLIILIVELCGLQARFPLSWRNFPITFACYAALFCLSASIIYPTTYVQFLSHGRSRDHAIAATFFSCIACVAYATEVAWTRARPGEITGYMATVPGLLKVLETFVACIIFAFISDTYLYQHQPALEWCVAVYAICFILAAIAILLNLGECTNVLPIPFPSFLSGLALLSVLLYATALVLWPLYQFDEKYGGQPRRSRDVSCSRSHAYYVCGWDRRLAVAILTAINLLAYVADLVHSAHLVFVKV.

The disordered stretch occupies residues Met1 to Ile25. Ser22 carries the post-translational modification Phosphoserine. 2 consecutive MARVEL domains span residues Ala31–Gly163 and Tyr168–Phe319. Helical transmembrane passes span Leu41–Thr61, Phe70–Leu90, Phe101–Pro121, Ala137–Trp157, Thr171–Ile191, Leu203–Leu223, Phe239–Pro259, and Leu294–Ser314.

This sequence belongs to the MAL family.

Its subcellular location is the membrane. In Pongo abelii (Sumatran orangutan), this protein is Myeloid-associated differentiation marker (MYADM).